The chain runs to 185 residues: Ribosome-recycling factor (185 aa).

The protein belongs to the RRF family.

It localises to the cytoplasm. In terms of biological role, responsible for the release of ribosomes from messenger RNA at the termination of protein biosynthesis. May increase the efficiency of translation by recycling ribosomes from one round of translation to another. In Nitrosospira multiformis (strain ATCC 25196 / NCIMB 11849 / C 71), this protein is Ribosome-recycling factor.